The sequence spans 201 residues: Dephospho-CoA kinase (201 aa).

In terms of domain architecture, DPCK spans 6-201; that stretch reads VMGLTGSIGM…RAIREKNPRG (196 aa). 14-19 provides a ligand contact to ATP; the sequence is GMGKSA.

Belongs to the CoaE family.

It localises to the cytoplasm. It catalyses the reaction 3'-dephospho-CoA + ATP = ADP + CoA + H(+). The protein operates within cofactor biosynthesis; coenzyme A biosynthesis; CoA from (R)-pantothenate: step 5/5. Functionally, catalyzes the phosphorylation of the 3'-hydroxyl group of dephosphocoenzyme A to form coenzyme A. This is Dephospho-CoA kinase from Novosphingobium aromaticivorans (strain ATCC 700278 / DSM 12444 / CCUG 56034 / CIP 105152 / NBRC 16084 / F199).